The chain runs to 266 residues: Glucosamine-6-phosphate deaminase (266 aa).

Aspartate 72 (proton acceptor; for enolization step) is an active-site residue. The active-site For ring-opening step is aspartate 141. Catalysis depends on histidine 143, which acts as the Proton acceptor; for ring-opening step. The For ring-opening step role is filled by glutamate 148.

This sequence belongs to the glucosamine/galactosamine-6-phosphate isomerase family. NagB subfamily. In terms of assembly, homohexamer; trimer of disulfide-linked dimers.

It carries out the reaction alpha-D-glucosamine 6-phosphate + H2O = beta-D-fructose 6-phosphate + NH4(+). It functions in the pathway amino-sugar metabolism; N-acetylneuraminate degradation; D-fructose 6-phosphate from N-acetylneuraminate: step 5/5. Its activity is regulated as follows. Allosterically activated by N-acetylglucosamine 6-phosphate (GlcNAc6P). Functionally, catalyzes the reversible isomerization-deamination of glucosamine 6-phosphate (GlcN6P) to form fructose 6-phosphate (Fru6P) and ammonium ion. The protein is Glucosamine-6-phosphate deaminase of Shigella dysenteriae serotype 1 (strain Sd197).